A 398-amino-acid polypeptide reads, in one-letter code: Elongation factor Tu (398 aa).

A tr-type G domain is found at 10-208 (KPHVNVGTIG…ALDSHIPEPT (199 aa)). The tract at residues 19 to 26 (GHIDHGKT) is G1. Position 19–26 (19–26 (GHIDHGKT)) interacts with GTP. Position 26 (Thr26) interacts with Mg(2+). A G2 region spans residues 60 to 64 (TKTVT). A G3 region spans residues 83–86 (DCPG). Residues 83–87 (DCPGH) and 138–141 (NKCD) contribute to the GTP site. Residues 138–141 (NKCD) are G4. The tract at residues 176–178 (SSL) is G5.

The protein belongs to the TRAFAC class translation factor GTPase superfamily. Classic translation factor GTPase family. EF-Tu/EF-1A subfamily. As to quaternary structure, monomer.

It localises to the cytoplasm. It carries out the reaction GTP + H2O = GDP + phosphate + H(+). Its function is as follows. GTP hydrolase that promotes the GTP-dependent binding of aminoacyl-tRNA to the A-site of ribosomes during protein biosynthesis. The sequence is that of Elongation factor Tu from Rhodopirellula baltica (strain DSM 10527 / NCIMB 13988 / SH1).